Consider the following 207-residue polypeptide: LexA repressor (207 aa).

A DNA-binding region (H-T-H motif) is located at residues 28–48 (VREIGEAVGLASSSTVHGHLS). Active-site for autocatalytic cleavage activity residues include Ser-130 and Lys-168.

It belongs to the peptidase S24 family. In terms of assembly, homodimer.

It carries out the reaction Hydrolysis of Ala-|-Gly bond in repressor LexA.. In terms of biological role, represses a number of genes involved in the response to DNA damage (SOS response), including recA and lexA. In the presence of single-stranded DNA, RecA interacts with LexA causing an autocatalytic cleavage which disrupts the DNA-binding part of LexA, leading to derepression of the SOS regulon and eventually DNA repair. The polypeptide is LexA repressor (Staphylococcus aureus (strain MSSA476)).